The sequence spans 380 residues: Glucose-1-phosphate adenylyltransferase (380 aa).

Residues glycine 164, 179–180 (EK), and serine 190 each bind alpha-D-glucose 1-phosphate.

This sequence belongs to the bacterial/plant glucose-1-phosphate adenylyltransferase family. In terms of assembly, homotetramer.

It carries out the reaction alpha-D-glucose 1-phosphate + ATP + H(+) = ADP-alpha-D-glucose + diphosphate. The protein operates within glycan biosynthesis; glycogen biosynthesis. Its function is as follows. Involved in the biosynthesis of ADP-glucose, a building block required for the elongation reactions to produce glycogen. Catalyzes the reaction between ATP and alpha-D-glucose 1-phosphate (G1P) to produce pyrophosphate and ADP-Glc. This chain is Glucose-1-phosphate adenylyltransferase, found in Streptococcus pneumoniae (strain CGSP14).